The following is a 152-amino-acid chain: SsrA-binding protein (152 aa).

Residues 132 to 142 (REAIKKRDVSD) are compositionally biased toward basic and acidic residues. The segment at 132–152 (REAIKKRDVSDQIRSSLRRSR) is disordered.

This sequence belongs to the SmpB family.

It localises to the cytoplasm. In terms of biological role, required for rescue of stalled ribosomes mediated by trans-translation. Binds to transfer-messenger RNA (tmRNA), required for stable association of tmRNA with ribosomes. tmRNA and SmpB together mimic tRNA shape, replacing the anticodon stem-loop with SmpB. tmRNA is encoded by the ssrA gene; the 2 termini fold to resemble tRNA(Ala) and it encodes a 'tag peptide', a short internal open reading frame. During trans-translation Ala-aminoacylated tmRNA acts like a tRNA, entering the A-site of stalled ribosomes, displacing the stalled mRNA. The ribosome then switches to translate the ORF on the tmRNA; the nascent peptide is terminated with the 'tag peptide' encoded by the tmRNA and targeted for degradation. The ribosome is freed to recommence translation, which seems to be the essential function of trans-translation. In Bdellovibrio bacteriovorus (strain ATCC 15356 / DSM 50701 / NCIMB 9529 / HD100), this protein is SsrA-binding protein.